The primary structure comprises 202 residues: N-(5'-phosphoribosyl)anthranilate isomerase (202 aa).

Belongs to the TrpF family.

The catalysed reaction is N-(5-phospho-beta-D-ribosyl)anthranilate = 1-(2-carboxyphenylamino)-1-deoxy-D-ribulose 5-phosphate. The protein operates within amino-acid biosynthesis; L-tryptophan biosynthesis; L-tryptophan from chorismate: step 3/5. The sequence is that of N-(5'-phosphoribosyl)anthranilate isomerase from Geobacter metallireducens (strain ATCC 53774 / DSM 7210 / GS-15).